A 462-amino-acid polypeptide reads, in one-letter code: Chitinase 1 (462 aa).

The signal sequence occupies residues 1 to 17 (MILNLIILLAISIVASA). Residues 18-291 (SNIAAYWGQN…NQLYQALSGS (274 aa)) enclose the GH18 domain. N57 carries an N-linked (GlcNAc...) asparagine glycan. The Proton donor role is filled by E147.

It belongs to the glycosyl hydrolase 18 family. Chitinase class III subfamily.

It localises to the secreted. The enzyme catalyses Random endo-hydrolysis of N-acetyl-beta-D-glucosaminide (1-&gt;4)-beta-linkages in chitin and chitodextrins.. This is Chitinase 1 (CHT1) from Candida albicans (Yeast).